The following is a 444-amino-acid chain: Phosphomethylpyrimidine synthase (444 aa).

Residues Asn80, Met109, Tyr138, His174, Ser194 to Gly196, Asp235 to Arg238, and Glu274 contribute to the substrate site. Position 278 (His278) interacts with Zn(2+). Position 301 (Tyr301) interacts with substrate. Position 342 (His342) interacts with Zn(2+). [4Fe-4S] cluster is bound by residues Cys422, Cys425, and Cys430.

This sequence belongs to the ThiC family. In terms of assembly, homodimer. [4Fe-4S] cluster is required as a cofactor.

It carries out the reaction 5-amino-1-(5-phospho-beta-D-ribosyl)imidazole + S-adenosyl-L-methionine = 4-amino-2-methyl-5-(phosphooxymethyl)pyrimidine + CO + 5'-deoxyadenosine + formate + L-methionine + 3 H(+). Its pathway is cofactor biosynthesis; thiamine diphosphate biosynthesis. In terms of biological role, catalyzes the synthesis of the hydroxymethylpyrimidine phosphate (HMP-P) moiety of thiamine from aminoimidazole ribotide (AIR) in a radical S-adenosyl-L-methionine (SAM)-dependent reaction. This chain is Phosphomethylpyrimidine synthase, found in Nitratiruptor sp. (strain SB155-2).